Here is a 152-residue protein sequence, read N- to C-terminus: Plant UBX domain-containing protein 12 (152 aa).

The interval 32-61 (KRFSEEESEETENTTNSSNAVFGFPNLPEE) is disordered. In terms of domain architecture, UBX spans 67–150 (DQSVLCRICV…GLANSLVSVT (84 aa)).

This chain is Plant UBX domain-containing protein 12, found in Arabidopsis thaliana (Mouse-ear cress).